The primary structure comprises 484 residues: Aspartyl/glutamyl-tRNA(Asn/Gln) amidotransferase subunit B (484 aa).

This sequence belongs to the GatB/GatE family. GatB subfamily. Heterotrimer of A, B and C subunits.

The enzyme catalyses L-glutamyl-tRNA(Gln) + L-glutamine + ATP + H2O = L-glutaminyl-tRNA(Gln) + L-glutamate + ADP + phosphate + H(+). It catalyses the reaction L-aspartyl-tRNA(Asn) + L-glutamine + ATP + H2O = L-asparaginyl-tRNA(Asn) + L-glutamate + ADP + phosphate + 2 H(+). Functionally, allows the formation of correctly charged Asn-tRNA(Asn) or Gln-tRNA(Gln) through the transamidation of misacylated Asp-tRNA(Asn) or Glu-tRNA(Gln) in organisms which lack either or both of asparaginyl-tRNA or glutaminyl-tRNA synthetases. The reaction takes place in the presence of glutamine and ATP through an activated phospho-Asp-tRNA(Asn) or phospho-Glu-tRNA(Gln). The sequence is that of Aspartyl/glutamyl-tRNA(Asn/Gln) amidotransferase subunit B from Bordetella bronchiseptica (strain ATCC BAA-588 / NCTC 13252 / RB50) (Alcaligenes bronchisepticus).